Consider the following 190-residue polypeptide: Probable DNA replication complex GINS protein PSF2 (190 aa).

It belongs to the GINS2/PSF2 family. As to quaternary structure, component of the GINS complex which is a heterotetramer of gins1, gins2, gins3 and gins4.

Its subcellular location is the nucleus. The GINS complex plays an essential role in the initiation of DNA replication. This chain is Probable DNA replication complex GINS protein PSF2, found in Brugia malayi (Filarial nematode worm).